A 403-amino-acid chain; its full sequence is Dual-specificity RNA methyltransferase RlmN (403 aa).

Catalysis depends on Glu126, which acts as the Proton acceptor. In terms of domain architecture, Radical SAM core spans 132–375 (ETDRGTLCVS…VRTPRGRDIL (244 aa)). Residues Cys139 and Cys378 are joined by a disulfide bond. [4Fe-4S] cluster is bound by residues Cys146, Cys150, and Cys153. Residues 204-205 (GE), Ser236, 258-260 (SLH), and Asn335 contribute to the S-adenosyl-L-methionine site. The S-methylcysteine intermediate role is filled by Cys378.

This sequence belongs to the radical SAM superfamily. RlmN family. [4Fe-4S] cluster serves as cofactor.

The protein localises to the cytoplasm. The catalysed reaction is adenosine(2503) in 23S rRNA + 2 reduced [2Fe-2S]-[ferredoxin] + 2 S-adenosyl-L-methionine = 2-methyladenosine(2503) in 23S rRNA + 5'-deoxyadenosine + L-methionine + 2 oxidized [2Fe-2S]-[ferredoxin] + S-adenosyl-L-homocysteine. It carries out the reaction adenosine(37) in tRNA + 2 reduced [2Fe-2S]-[ferredoxin] + 2 S-adenosyl-L-methionine = 2-methyladenosine(37) in tRNA + 5'-deoxyadenosine + L-methionine + 2 oxidized [2Fe-2S]-[ferredoxin] + S-adenosyl-L-homocysteine. Specifically methylates position 2 of adenine 2503 in 23S rRNA and position 2 of adenine 37 in tRNAs. m2A2503 modification seems to play a crucial role in the proofreading step occurring at the peptidyl transferase center and thus would serve to optimize ribosomal fidelity. The sequence is that of Dual-specificity RNA methyltransferase RlmN from Bradyrhizobium sp. (strain BTAi1 / ATCC BAA-1182).